The primary structure comprises 410 residues: Probable nicotinate phosphoribosyltransferase (410 aa).

Residues Y15, F170, and T220 each contribute to the nicotinate site. H223 carries the phosphohistidine modification. T348 is a binding site for 5-phospho-alpha-D-ribose 1-diphosphate.

Belongs to the NAPRTase family. Requires Mg(2+) as cofactor. It depends on Mn(2+) as a cofactor. Post-translationally, transiently phosphorylated on a His residue during the reaction cycle. Phosphorylation strongly increases the affinity for substrates and increases the rate of nicotinate D-ribonucleotide production. Dephosphorylation regenerates the low-affinity form of the enzyme, leading to product release.

The enzyme catalyses nicotinate + 5-phospho-alpha-D-ribose 1-diphosphate + ATP + H2O = nicotinate beta-D-ribonucleotide + ADP + phosphate + diphosphate. It functions in the pathway cofactor biosynthesis; NAD(+) biosynthesis; nicotinate D-ribonucleotide from nicotinate: step 1/1. Catalyzes the first step in the biosynthesis of NAD from nicotinic acid, the ATP-dependent synthesis of beta-nicotinate D-ribonucleotide from nicotinate and 5-phospho-D-ribose 1-phosphate. Helps prevent cellular oxidative stress via its role in NAD biosynthesis. The polypeptide is Probable nicotinate phosphoribosyltransferase (Schizosaccharomyces pombe (strain 972 / ATCC 24843) (Fission yeast)).